Here is a 60-residue protein sequence, read N- to C-terminus: MAKGKENRIVITLECTEAKKEGVPVSRYTTTKNKKNTTERLILKKYNPNLKRHTEHKEIK.

Belongs to the bacterial ribosomal protein bL33 family.

The polypeptide is Large ribosomal subunit protein bL33 (Chlorobaculum tepidum (strain ATCC 49652 / DSM 12025 / NBRC 103806 / TLS) (Chlorobium tepidum)).